Here is a 118-residue protein sequence, read N- to C-terminus: Light-harvesting protein B-800/850 gamma chain (118 aa).

Its function is as follows. Seems to be required for the LH-II stabilization. The polypeptide is Light-harvesting protein B-800/850 gamma chain (pucE) (Rhodobacter capsulatus (Rhodopseudomonas capsulata)).